We begin with the raw amino-acid sequence, 431 residues long: Glutamate-1-semialdehyde 2,1-aminomutase (431 aa).

Lys265 is subject to N6-(pyridoxal phosphate)lysine.

It belongs to the class-III pyridoxal-phosphate-dependent aminotransferase family. HemL subfamily. Homodimer. Pyridoxal 5'-phosphate serves as cofactor.

It is found in the cytoplasm. It carries out the reaction (S)-4-amino-5-oxopentanoate = 5-aminolevulinate. Its pathway is porphyrin-containing compound metabolism; protoporphyrin-IX biosynthesis; 5-aminolevulinate from L-glutamyl-tRNA(Glu): step 2/2. This Aliivibrio fischeri (strain MJ11) (Vibrio fischeri) protein is Glutamate-1-semialdehyde 2,1-aminomutase.